Here is a 154-residue protein sequence, read N- to C-terminus: Crossover junction endodeoxyribonuclease RuvC (154 aa).

Active-site residues include Asp-7, Glu-67, and Asp-139. Positions 7, 67, and 139 each coordinate Mg(2+).

This sequence belongs to the RuvC family. In terms of assembly, homodimer which binds Holliday junction (HJ) DNA. The HJ becomes 2-fold symmetrical on binding to RuvC with unstacked arms; it has a different conformation from HJ DNA in complex with RuvA. In the full resolvosome a probable DNA-RuvA(4)-RuvB(12)-RuvC(2) complex forms which resolves the HJ. Mg(2+) serves as cofactor.

The protein resides in the cytoplasm. The enzyme catalyses Endonucleolytic cleavage at a junction such as a reciprocal single-stranded crossover between two homologous DNA duplexes (Holliday junction).. The RuvA-RuvB-RuvC complex processes Holliday junction (HJ) DNA during genetic recombination and DNA repair. Endonuclease that resolves HJ intermediates. Cleaves cruciform DNA by making single-stranded nicks across the HJ at symmetrical positions within the homologous arms, yielding a 5'-phosphate and a 3'-hydroxyl group; requires a central core of homology in the junction. The consensus cleavage sequence is 5'-(A/T)TT(C/G)-3'. Cleavage occurs on the 3'-side of the TT dinucleotide at the point of strand exchange. HJ branch migration catalyzed by RuvA-RuvB allows RuvC to scan DNA until it finds its consensus sequence, where it cleaves and resolves the cruciform DNA. The polypeptide is Crossover junction endodeoxyribonuclease RuvC (Synechococcus sp. (strain CC9605)).